Here is a 173-residue protein sequence, read N- to C-terminus: Nicotinamide-nucleotide adenylyltransferase (173 aa).

This sequence belongs to the archaeal NMN adenylyltransferase family.

It is found in the cytoplasm. It catalyses the reaction beta-nicotinamide D-ribonucleotide + ATP + H(+) = diphosphate + NAD(+). The protein operates within cofactor biosynthesis; NAD(+) biosynthesis; NAD(+) from nicotinamide D-ribonucleotide: step 1/1. This is Nicotinamide-nucleotide adenylyltransferase from Methanosarcina mazei (strain ATCC BAA-159 / DSM 3647 / Goe1 / Go1 / JCM 11833 / OCM 88) (Methanosarcina frisia).